Consider the following 60-residue polypeptide: Large ribosomal subunit protein uL30 (60 aa).

This sequence belongs to the universal ribosomal protein uL30 family. In terms of assembly, part of the 50S ribosomal subunit.

This Dechloromonas aromatica (strain RCB) protein is Large ribosomal subunit protein uL30.